The primary structure comprises 247 residues: 2,3-bisphosphoglycerate-dependent phosphoglycerate mutase (247 aa).

Residues 8–15 (RHGESTWN), 21–22 (TG), Arg-60, 87–90 (ERHY), Lys-98, 114–115 (RR), and 183–184 (GN) contribute to the substrate site. His-9 serves as the catalytic Tele-phosphohistidine intermediate. The active-site Proton donor/acceptor is the Glu-87.

This sequence belongs to the phosphoglycerate mutase family. BPG-dependent PGAM subfamily. As to quaternary structure, homodimer.

It catalyses the reaction (2R)-2-phosphoglycerate = (2R)-3-phosphoglycerate. Its pathway is carbohydrate degradation; glycolysis; pyruvate from D-glyceraldehyde 3-phosphate: step 3/5. Functionally, catalyzes the interconversion of 2-phosphoglycerate and 3-phosphoglycerate. The polypeptide is 2,3-bisphosphoglycerate-dependent phosphoglycerate mutase (Albidiferax ferrireducens (strain ATCC BAA-621 / DSM 15236 / T118) (Rhodoferax ferrireducens)).